The primary structure comprises 452 residues: uncharacterized protein (452 aa).

14 helical membrane-spanning segments follow: residues 8 to 28, 39 to 59, 77 to 97, 100 to 122, 134 to 156, 161 to 183, 203 to 222, 226 to 243, 266 to 286, 302 to 322, 330 to 350, 359 to 379, 393 to 415, and 425 to 447; these read AVFL…SSMI, FHLS…ASAV, FLFG…APTF, LLVM…VGLI, LAVL…GFLI, WPAI…LYMF, LGIV…LLSF, PHAV…AFVW, AVYV…FGLP, LFML…GKWI, PIFA…IFFI, LILS…QAAM, GLFQ…ILFG, and MMGI…FAAL.

This sequence belongs to the major facilitator superfamily.

Its subcellular location is the cell membrane. This is an uncharacterized protein from Bacillus subtilis (strain 168).